Reading from the N-terminus, the 1059-residue chain is Isoleucine--tRNA ligase (1059 aa).

A 'HIGH' region motif is present at residues 47–57; that stretch reads PYTSGQMHLGT. Residues 606-610 carry the 'KMSKS' region motif; that stretch reads KMSKS. Lys609 contacts ATP.

The protein belongs to the class-I aminoacyl-tRNA synthetase family. IleS type 2 subfamily. As to quaternary structure, monomer. It depends on Zn(2+) as a cofactor.

The protein resides in the cytoplasm. The catalysed reaction is tRNA(Ile) + L-isoleucine + ATP = L-isoleucyl-tRNA(Ile) + AMP + diphosphate. Its function is as follows. Catalyzes the attachment of isoleucine to tRNA(Ile). As IleRS can inadvertently accommodate and process structurally similar amino acids such as valine, to avoid such errors it has two additional distinct tRNA(Ile)-dependent editing activities. One activity is designated as 'pretransfer' editing and involves the hydrolysis of activated Val-AMP. The other activity is designated 'posttransfer' editing and involves deacylation of mischarged Val-tRNA(Ile). The chain is Isoleucine--tRNA ligase from Haloquadratum walsbyi (strain DSM 16790 / HBSQ001).